The sequence spans 124 residues: UPF0482 protein YpsIP31758_1865 (124 aa).

The first 32 residues, M1–A32, serve as a signal peptide directing secretion. The interval G47–T68 is disordered.

It belongs to the UPF0482 family.

This chain is UPF0482 protein YpsIP31758_1865, found in Yersinia pseudotuberculosis serotype O:1b (strain IP 31758).